We begin with the raw amino-acid sequence, 345 residues long: 3-hydroxy-5-methyl-1-naphthoate 3-O-methyltransferase (345 aa).

Residue Asp-205 participates in S-adenosyl-L-methionine binding. Residue His-252 is the Proton acceptor of the active site.

It belongs to the class I-like SAM-binding methyltransferase superfamily. Cation-independent O-methyltransferase family.

It catalyses the reaction 3-hydroxy-5-methyl-1-naphthoate + S-adenosyl-L-methionine = 3-methoxy-5-methyl-1-naphthoate + S-adenosyl-L-homocysteine + H(+). Its pathway is antibiotic biosynthesis. Its activity is regulated as follows. Inhibited by different divalent cations, such as Mg(2+), Mn(2+), Fe(2+), Cu(2+) and Zn(2+). O-methyltransferase that mediates the formation of 3-methoxy-5-methyl-1-naphthoate from 3-hydroxy-5-methyl-1-naphthoate in the biosynthesis of the antitumor antibiotic azinomycin B. The protein is 3-hydroxy-5-methyl-1-naphthoate 3-O-methyltransferase of Streptomyces sahachiroi.